A 185-amino-acid polypeptide reads, in one-letter code: Ribosome-recycling factor (185 aa).

The protein belongs to the RRF family.

The protein localises to the cytoplasm. Functionally, responsible for the release of ribosomes from messenger RNA at the termination of protein biosynthesis. May increase the efficiency of translation by recycling ribosomes from one round of translation to another. In Thermosipho africanus (strain TCF52B), this protein is Ribosome-recycling factor.